A 1206-amino-acid chain; its full sequence is DNA-directed RNA polymerase subunit beta' (1206 aa).

Zn(2+) is bound by residues C60, C62, C75, and C78. Mg(2+) contacts are provided by D449, D451, and D453. Zn(2+) is bound by residues C822, C896, C903, and C906.

It belongs to the RNA polymerase beta' chain family. In terms of assembly, the RNAP catalytic core consists of 2 alpha, 1 beta, 1 beta' and 1 omega subunit. When a sigma factor is associated with the core the holoenzyme is formed, which can initiate transcription. Mg(2+) is required as a cofactor. Zn(2+) serves as cofactor.

It carries out the reaction RNA(n) + a ribonucleoside 5'-triphosphate = RNA(n+1) + diphosphate. DNA-dependent RNA polymerase catalyzes the transcription of DNA into RNA using the four ribonucleoside triphosphates as substrates. The sequence is that of DNA-directed RNA polymerase subunit beta' from Staphylococcus haemolyticus (strain JCSC1435).